We begin with the raw amino-acid sequence, 339 residues long: Phenylalanine--tRNA ligase alpha subunit (339 aa).

A Mg(2+)-binding site is contributed by Glu254.

The protein belongs to the class-II aminoacyl-tRNA synthetase family. Phe-tRNA synthetase alpha subunit type 1 subfamily. In terms of assembly, tetramer of two alpha and two beta subunits. Mg(2+) is required as a cofactor.

Its subcellular location is the cytoplasm. It catalyses the reaction tRNA(Phe) + L-phenylalanine + ATP = L-phenylalanyl-tRNA(Phe) + AMP + diphosphate + H(+). The sequence is that of Phenylalanine--tRNA ligase alpha subunit from Clostridium perfringens (strain ATCC 13124 / DSM 756 / JCM 1290 / NCIMB 6125 / NCTC 8237 / Type A).